A 289-amino-acid chain; its full sequence is Glycine--tRNA ligase alpha subunit (289 aa).

Belongs to the class-II aminoacyl-tRNA synthetase family. Tetramer of two alpha and two beta subunits.

The protein localises to the cytoplasm. It catalyses the reaction tRNA(Gly) + glycine + ATP = glycyl-tRNA(Gly) + AMP + diphosphate. The sequence is that of Glycine--tRNA ligase alpha subunit (glyQ) from Rickettsia prowazekii (strain Madrid E).